Here is a 1051-residue protein sequence, read N- to C-terminus: Putative helicase/primase complex protein (1051 aa).

The protein belongs to the asfivirus F1055L family.

May be involved in DNA replication. This Ornithodoros (relapsing fever ticks) protein is Putative helicase/primase complex protein.